Consider the following 610-residue polypeptide: UvrABC system protein C (610 aa).

The region spanning 16 to 94 is the GIY-YIG domain; that stretch reads SQPGVYRMYD…IKLYQPRYNV (79 aa). The UVR domain maps to 204–239; sequence DQVLTQLIARMEKASQDLAFEEAARIRDQIQAVRRV.

Belongs to the UvrC family. As to quaternary structure, interacts with UvrB in an incision complex.

It is found in the cytoplasm. Its function is as follows. The UvrABC repair system catalyzes the recognition and processing of DNA lesions. UvrC both incises the 5' and 3' sides of the lesion. The N-terminal half is responsible for the 3' incision and the C-terminal half is responsible for the 5' incision. The protein is UvrABC system protein C of Salmonella gallinarum (strain 287/91 / NCTC 13346).